We begin with the raw amino-acid sequence, 492 residues long: High-affinity nickel transport protein (492 aa).

Residues 1–24 lie on the Cytoplasmic side of the membrane; the sequence is MLSRWTRRVNESRLAQRKLTLLGR. Residues 25 to 45 form a helical membrane-spanning segment; that stretch reads AIALVVGELLFNAVCWIAAGI. Topologically, residues 46–50 are extracellular; sequence CFGKT. The helical transmembrane segment at 51–71 threads the bilayer; sequence DGILGLALLAWTIGLRHGLDA. Residues 72-94 are Cytoplasmic-facing; sequence DHISAIDNATRQLVSQGQLPITC. The helical transmembrane segment at 95-115 threads the bilayer; that stretch reads GLFFSLGHSTIVIVVNVAIAV. At 116 to 136 the chain is on the extracellular side; the sequence is SVDIYDKLDRVGSIGGIVGAA. The chain crosses the membrane as a helical span at residues 137–157; sequence VSASFLFLIACLNIYFLVGAI. Residues 158–210 are Cytoplasmic-facing; that stretch reads KQRRSMKRRQALGLPPDEDEGDPSKIYGGGCMVRVVGPILRAVDRPWKMYPVG. A helical membrane pass occupies residues 211 to 231; that stretch reads VLFGFGFDTASSIALLAISAI. Topologically, residues 232–239 are extracellular; it reads AQRGPNGD. Residues 240–260 form a helical membrane-spanning segment; it reads AISHGKIVILPFLFTAGMSLV. Residues 261 to 382 are Cytoplasmic-facing; it reads DSLDSILMLY…AKANTMSSLS (122 aa). Residues 383-403 traverse the membrane as a helical segment; it reads IILTLLSILVALSISLIEIMG. Residues 404 to 439 lie on the Extracellular side of the membrane; the sequence is LIGDNCTQCQDAANDPDGGGLAGSWWRAWARANDQS. A glycan (N-linked (GlcNAc...) asparagine) is linked at Asn408. Residues 440–460 traverse the membrane as a helical segment; that stretch reads GYIGAAIVGCFAAILAGWYGA. The Cytoplasmic portion of the chain corresponds to 461–492; the sequence is KWGKKKWKARRDANAAIVLEDNEDDAAETPVA.

This sequence belongs to the NiCoT transporter (TC 2.A.52) family.

It localises to the cell membrane. Functionally, high-affinity nickel-specific transporter responsible for nickel uptake and required for high levels of activity of urease URE1. Does not transport cobalt. Plays a role in host brain invasion. This is High-affinity nickel transport protein from Cryptococcus neoformans var. grubii serotype A (strain H99 / ATCC 208821 / CBS 10515 / FGSC 9487) (Filobasidiella neoformans var. grubii).